The chain runs to 295 residues: Keratin-like protein KRT222 (295 aa).

The IF rod domain maps to 1-150; that stretch reads MELSQLLNEI…HLLEKEEIRY (150 aa). Residues 2-150 adopt a coiled-coil conformation; the sequence is ELSQLLNEIR…HLLEKEEIRY (149 aa).

Belongs to the intermediate filament family.

The chain is Keratin-like protein KRT222 (KRT222) from Homo sapiens (Human).